Reading from the N-terminus, the 166-residue chain is MSKVLEAKQSAVEEIKTKLSASASTVIVDYRGLNVGEITELRKQLRDAGIEFKVYKNSLTRRAVEANGYEGLEGALTGPNAIAFSNEDVVAPAKILNDFAKDHEALEIKAGVIEGKVASLEEIKALATLPSREGLLSMLCNVLQAPVRGLAIATKAVADQKEGQEA.

The protein belongs to the universal ribosomal protein uL10 family. As to quaternary structure, part of the ribosomal stalk of the 50S ribosomal subunit. The N-terminus interacts with L11 and the large rRNA to form the base of the stalk. The C-terminus forms an elongated spine to which L12 dimers bind in a sequential fashion forming a multimeric L10(L12)X complex.

Its function is as follows. Forms part of the ribosomal stalk, playing a central role in the interaction of the ribosome with GTP-bound translation factors. The protein is Large ribosomal subunit protein uL10 of Listeria monocytogenes serotype 4b (strain CLIP80459).